The following is a 468-amino-acid chain: Tapasin-related protein (468 aa).

Residues 1–18 (MGTQEGWCLLLCLALSGA) form the signal peptide. Over 19–405 (AETKPHPAEG…STQVVPPERR (387 aa)) the chain is Lumenal. The 117-residue stretch at 181 to 297 (PQGTVRTAVE…SLYRAQQIIQ (117 aa)) folds into the Ig-like V-type domain. 2 cysteine pairs are disulfide-bonded: cysteine 212/cysteine 283 and cysteine 321/cysteine 382. The 91-residue stretch at 304–394 (PKVRLSLANE…THISLEEPLG (91 aa)) folds into the Ig-like C1-type domain. Residues 406-426 (TALGVIFASSLFLLALMFLGL) form a helical membrane-spanning segment. The Cytoplasmic portion of the chain corresponds to 427 to 468 (QRRQAPTGLGLLQAERWETTSCADTQSSHLHEDRTARVSQPS). Residues 449 to 468 (ADTQSSHLHEDRTARVSQPS) are disordered.

In terms of assembly, interacts with peptide-free HLA-A*02-B2M complexes or those loaded with low affinity peptides, likely facilitating peptide exchange onto higher affinity peptides. Interacts with MR1 in a ligand-independent way; this interaction may stabilize MR1 pool and facilitate ligand loading and dissociation.

The protein resides in the cell membrane. It is found in the endoplasmic reticulum membrane. The protein localises to the microsome membrane. It localises to the golgi apparatus membrane. Functionally, component of the antigen processing and presentation pathway, which binds to MHC class I coupled with beta2-microglobulin/B2M. Association between TAPBPR and MHC class I occurs in the absence of a functional peptide-loading complex (PLC). In Homo sapiens (Human), this protein is Tapasin-related protein (TAPBPL).